Reading from the N-terminus, the 213-residue chain is Adenylate kinase (213 aa).

10–15 (GAGKGT) contributes to the ATP binding site. Residues 30–59 (STGDMFRAAIKEGTEMGKKAKEYMDKGALV) form an NMP region. AMP-binding positions include T31, R36, 57–59 (ALV), 85–88 (GFPR), and Q92. Residues 126–163 (GRRVCKNCGASYHVIFNPPQAEGKCNSCNGELYQRSDD) are LID. R127 contacts ATP. Zn(2+)-binding residues include C130 and C133. Position 136 to 137 (136 to 137 (SY)) interacts with ATP. Zn(2+) contacts are provided by C150 and C153. AMP is bound by residues R160 and R171. Q199 serves as a coordination point for ATP.

This sequence belongs to the adenylate kinase family. Monomer.

The protein resides in the cytoplasm. The catalysed reaction is AMP + ATP = 2 ADP. Its pathway is purine metabolism; AMP biosynthesis via salvage pathway; AMP from ADP: step 1/1. Functionally, catalyzes the reversible transfer of the terminal phosphate group between ATP and AMP. Plays an important role in cellular energy homeostasis and in adenine nucleotide metabolism. The chain is Adenylate kinase from Desulforamulus reducens (strain ATCC BAA-1160 / DSM 100696 / MI-1) (Desulfotomaculum reducens).